The following is a 407-amino-acid chain: Imidazolonepropionase (407 aa).

Residues His74 and His76 each coordinate Fe(3+). The Zn(2+) site is built by His74 and His76. The 4-imidazolone-5-propanoate site is built by Arg83, Tyr146, and His179. Position 146 (Tyr146) interacts with N-formimidoyl-L-glutamate. Residue His244 coordinates Fe(3+). His244 is a Zn(2+) binding site. Gln247 contacts 4-imidazolone-5-propanoate. Position 319 (Asp319) interacts with Fe(3+). Residue Asp319 participates in Zn(2+) binding. Residues Asn321 and Gly323 each coordinate N-formimidoyl-L-glutamate. Thr324 contacts 4-imidazolone-5-propanoate.

It belongs to the metallo-dependent hydrolases superfamily. HutI family. Zn(2+) is required as a cofactor. Requires Fe(3+) as cofactor.

It is found in the cytoplasm. It catalyses the reaction 4-imidazolone-5-propanoate + H2O = N-formimidoyl-L-glutamate. The protein operates within amino-acid degradation; L-histidine degradation into L-glutamate; N-formimidoyl-L-glutamate from L-histidine: step 3/3. Catalyzes the hydrolytic cleavage of the carbon-nitrogen bond in imidazolone-5-propanoate to yield N-formimidoyl-L-glutamate. It is the third step in the universal histidine degradation pathway. This Salmonella paratyphi A (strain ATCC 9150 / SARB42) protein is Imidazolonepropionase.